We begin with the raw amino-acid sequence, 76 residues long: Sea anemone sodium channel inhibitor type I (76 aa).

The signal sequence occupies residues 1-19 (MNRMLIIFVVVTVFGLASG). The propeptide occupies 20–30 (LGPNMPAPDLA). Cystine bridges form between Cys-37–Cys-72, Cys-39–Cys-60, and Cys-53–Cys-73.

This sequence belongs to the sea anemone sodium channel inhibitory toxin family. Type I subfamily. As to expression, expressed in acontia, a specialised envenomation structure laden with batteries of venom-containing nematocysts found only in the superfamily Metridioidea.

It localises to the secreted. The protein localises to the nematocyst. In terms of biological role, may affect sodium channels (Nav). This Calliactis polypus (Hermit crab anemone) protein is Sea anemone sodium channel inhibitor type I.